A 193-amino-acid chain; its full sequence is Molybdenum cofactor guanylyltransferase (193 aa).

Residues 8-10, Lys21, Asp67, and Asp98 contribute to the GTP site; that span reads LAG. A Mg(2+)-binding site is contributed by Asp98.

Belongs to the MobA family. As to quaternary structure, monomer. It depends on Mg(2+) as a cofactor.

The protein localises to the cytoplasm. The catalysed reaction is Mo-molybdopterin + GTP + H(+) = Mo-molybdopterin guanine dinucleotide + diphosphate. Transfers a GMP moiety from GTP to Mo-molybdopterin (Mo-MPT) cofactor (Moco or molybdenum cofactor) to form Mo-molybdopterin guanine dinucleotide (Mo-MGD) cofactor. This is Molybdenum cofactor guanylyltransferase from Cereibacter sphaeroides (Rhodobacter sphaeroides).